The chain runs to 359 residues: Peptide chain release factor 1 (359 aa).

Q235 bears the N5-methylglutamine mark. Residues Q283 to Y309 are disordered.

The protein belongs to the prokaryotic/mitochondrial release factor family. Methylated by PrmC. Methylation increases the termination efficiency of RF1.

It localises to the cytoplasm. Peptide chain release factor 1 directs the termination of translation in response to the peptide chain termination codons UAG and UAA. The polypeptide is Peptide chain release factor 1 (Brucella suis (strain ATCC 23445 / NCTC 10510)).